We begin with the raw amino-acid sequence, 415 residues long: Histidine--tRNA ligase (415 aa).

The protein belongs to the class-II aminoacyl-tRNA synthetase family. In terms of assembly, homodimer.

The protein resides in the cytoplasm. The enzyme catalyses tRNA(His) + L-histidine + ATP = L-histidyl-tRNA(His) + AMP + diphosphate + H(+). The chain is Histidine--tRNA ligase from Clostridium botulinum (strain 657 / Type Ba4).